The following is a 1061-amino-acid chain: Lysine-specific demethylase jmjd-3.1 (1061 aa).

2 disordered regions span residues 30–49 (VKNSQETPPFPGMNSTMRPV) and 256–417 (KSLS…KRRT). Residues 271 to 287 (QHTNSVGSSIGTTSGDS) are compositionally biased toward polar residues. A compositionally biased stretch (low complexity) spans 310 to 320 (STSSEFTETTS). A compositionally biased stretch (polar residues) spans 321–330 (VANQTESNAG). Residues 369-417 (KKKEQSATEPPIPRTKRAYTKNPNTIRKRRMKKNQSDDEEDDGPPKRRT) form a required for nuclear localization region. The required for binding of unc-3 and for function in Y-to-PDA transdifferentiation stretch occupies residues 418 to 759 (INYQIEFRDA…FGTNIDLLSE (342 aa)). Positions 760–923 (NFKKQMNEIE…LATSIVAHDH (164 aa)) constitute a JmjC domain. Fe cation is bound by residues H811, E813, and H891. Zn(2+)-binding residues include C998, C1001, C1025, and C1028.

Belongs to the UTX family. In terms of assembly, interacts with wdr-5.1 and unc-3. Fe(2+) serves as cofactor. As to expression, mainly expressed in head and tail.

It is found in the nucleus. In terms of biological role, histone demethylase that specifically demethylates trimethylated 'Lys-27' of histone H3, a mark associated with transcriptional repression, thereby playing a central role in the histone code. Involved in the transcriptional regulation of the heat shock response, unfolded protein response and possibly other stress response target genes. Required for gonad development and organization. Required for the robust transdifferentiation of the Y rectal epithelial cell to the PDA motor neuron during larval development. Acts cell-autonomously in Y-to-PDA transdifferentiation, which depends on the demethylase activity and on recognition of the H3 tail. Cooperates with set-2 and unc-3 to ensure robust Y-to-PDA transdifferentiation. Promotes mitochondrial stress-induced longevity. Involved in lifespan regulation. The protein is Lysine-specific demethylase jmjd-3.1 of Caenorhabditis elegans.